The following is a 308-amino-acid chain: Ribonuclease HIII (308 aa).

In terms of domain architecture, RNase H type-2 spans phenylalanine 88–glutamine 304. Residues aspartate 94, glutamate 95, and aspartate 199 each contribute to the a divalent metal cation site.

Belongs to the RNase HII family. RnhC subfamily. The cofactor is Mn(2+). Requires Mg(2+) as cofactor.

The protein resides in the cytoplasm. It carries out the reaction Endonucleolytic cleavage to 5'-phosphomonoester.. Functionally, endonuclease that specifically degrades the RNA of RNA-DNA hybrids. In Staphylococcus epidermidis (strain ATCC 12228 / FDA PCI 1200), this protein is Ribonuclease HIII.